Consider the following 235-residue polypeptide: Type III pantothenate kinase (235 aa).

Position 6–13 (6–13 (DVGNTSLK)) interacts with ATP. Residues Y79 and 86–89 (GIDR) each bind substrate. D88 serves as the catalytic Proton acceptor. D109 contributes to the K(+) binding site. T112 contributes to the ATP binding site. T164 contributes to the substrate binding site.

This sequence belongs to the type III pantothenate kinase family. As to quaternary structure, homodimer. Requires NH4(+) as cofactor. K(+) serves as cofactor.

The protein resides in the cytoplasm. The catalysed reaction is (R)-pantothenate + ATP = (R)-4'-phosphopantothenate + ADP + H(+). Its pathway is cofactor biosynthesis; coenzyme A biosynthesis; CoA from (R)-pantothenate: step 1/5. Catalyzes the phosphorylation of pantothenate (Pan), the first step in CoA biosynthesis. The sequence is that of Type III pantothenate kinase from Pseudoalteromonas translucida (strain TAC 125).